A 256-amino-acid polypeptide reads, in one-letter code: D-aminoacyl-tRNA deacylase (256 aa).

The protein belongs to the DtdA deacylase family. Monomer. Requires Zn(2+) as cofactor.

It carries out the reaction a D-aminoacyl-tRNA + H2O = a tRNA + a D-alpha-amino acid + H(+). The catalysed reaction is glycyl-tRNA(Ala) + H2O = tRNA(Ala) + glycine + H(+). Functionally, D-aminoacyl-tRNA deacylase with broad substrate specificity. By recycling D-aminoacyl-tRNA to D-amino acids and free tRNA molecules, this enzyme counteracts the toxicity associated with the formation of D-aminoacyl-tRNA entities in vivo. This Thermoplasma volcanium (strain ATCC 51530 / DSM 4299 / JCM 9571 / NBRC 15438 / GSS1) protein is D-aminoacyl-tRNA deacylase.